Reading from the N-terminus, the 534-residue chain is MDGVSPKFVLPETFDGVRMEITGQLGMIWELVKAPVIVPLLQLAVYICLLMSVMLLCERVYMGIVIVLVKLFWKKPDKRYKFEPIHDDEELGSSNFPVVLVQIPMFNEREVYKLSIGAACGLSWPSDRLVIQVLDDSTDPTVKQMVEVECQRWASKGINIRYQIRENRVGYKAGALKEGLKRSYVKHCEYVVIFDADFQPEPDFLRRSIPFLMHNPNIALVQARWRFVNSDECLLTRMQEMSLDYHFTVEQEVGSSTHAFFGFNGTAGIWRIAAINEAGGWKDRTTVEDMDLAVRASLRGWKFLYLGDLQVKSELPSTFRAFRFQQHRWSCGPANLFRKMVMEIVRNKKVRFWKKVYVIYSFFFVRKIIAHWVTFCFYCVVLPLTILVPEVKVPIWGSVYIPSIITILNSVGTPRSIHLLFYWILFENVMSLHRTKATLIGLFEAGRANEWVVTAKLGSGQSAKGNTKGIKRFPRIFKLPDRLNTLELGFAAFLFVCGCYDFVHGKNNYFIYLFLQTMSFFISGLGWIGTYVPS.

The helical transmembrane segment at 36–56 threads the bilayer; the sequence is VIVPLLQLAVYICLLMSVMLL. The active site involves Asp136. Asp195 and Asp197 together coordinate substrate. Asp289 is an active-site residue. Helical transmembrane passes span 368 to 388, 404 to 426, 483 to 503, and 509 to 529; these read IIAHWVTFCFYCVVLPLTILV, IITILNSVGTPRSIHLLFYWILF, LNTLELGFAAFLFVCGCYDFV, and YFIYLFLQTMSFFISGLGWIG.

Belongs to the glycosyltransferase 2 family. Plant cellulose synthase-like A subfamily.

The protein resides in the golgi apparatus membrane. The catalysed reaction is GDP-mannose + (glucomannan)n = GDP + (glucomannan)n+1.. In terms of biological role, possesses glucomannan synthase and mannan synthase activities in vitro. Mannan synthase consists of a 4-beta-mannosyltransferase activity on mannan using GDP-mannose. The beta-1,4-mannan product is the backbone for galactomannan synthesis by galactomannan galactosyltransferase. Galactomannan is a noncellulosic polysaccharides of plant cell wall. This Arabidopsis thaliana (Mouse-ear cress) protein is Glucomannan 4-beta-mannosyltransferase 2.